We begin with the raw amino-acid sequence, 153 residues long: Arginine repressor (153 aa).

It belongs to the ArgR family.

The protein resides in the cytoplasm. It functions in the pathway amino-acid biosynthesis; L-arginine biosynthesis [regulation]. Regulates arginine biosynthesis genes. This chain is Arginine repressor, found in Syntrophomonas wolfei subsp. wolfei (strain DSM 2245B / Goettingen).